Consider the following 279-residue polypeptide: Putative pyruvate, phosphate dikinase regulatory protein (279 aa).

Residue 156–163 (GVSRTSKT) participates in ADP binding.

It belongs to the pyruvate, phosphate/water dikinase regulatory protein family. PDRP subfamily.

The enzyme catalyses N(tele)-phospho-L-histidyl/L-threonyl-[pyruvate, phosphate dikinase] + ADP = N(tele)-phospho-L-histidyl/O-phospho-L-threonyl-[pyruvate, phosphate dikinase] + AMP + H(+). It carries out the reaction N(tele)-phospho-L-histidyl/O-phospho-L-threonyl-[pyruvate, phosphate dikinase] + phosphate + H(+) = N(tele)-phospho-L-histidyl/L-threonyl-[pyruvate, phosphate dikinase] + diphosphate. Bifunctional serine/threonine kinase and phosphorylase involved in the regulation of the pyruvate, phosphate dikinase (PPDK) by catalyzing its phosphorylation/dephosphorylation. This chain is Putative pyruvate, phosphate dikinase regulatory protein, found in Maricaulis maris (strain MCS10) (Caulobacter maris).